The following is an 81-amino-acid chain: Trefoil factor 3 (81 aa).

Residues 1–22 (METRAFWTTLLLVLVAGSSCKA) form the signal peptide. Residues 31–74 (SQCMVPANVRVDCGYPTVTSEQCNNRGCCFDSSIPNVPWCFKPL) form the P-type domain. 3 disulfides stabilise this stretch: cysteine 33/cysteine 59, cysteine 43/cysteine 58, and cysteine 53/cysteine 70.

In terms of assembly, monomer. Homodimer; disulfide-linked. In terms of tissue distribution, expressed in goblet cells of the intestines, and colon, in paraventricular hypothalamus and supraoptic nuclei. Weakly expressed in gastric epithelial cells (at protein level). Expressed by goblet cells of small and large intestinal epithelia, kidney and stomach. Expressed in the paraventricular hypothalamus, arcuate nucleus and amygdala of the brain. Weakly expressed in gastric epithelial cells.

The protein localises to the secreted. Its subcellular location is the extracellular space. It localises to the extracellular matrix. It is found in the cytoplasm. Involved in the maintenance and repair of the intestinal mucosa. Promotes the mobility of epithelial cells in healing processes (motogen). This is Trefoil factor 3 (Tff3) from Rattus norvegicus (Rat).